The chain runs to 185 residues: Elongation factor P (185 aa).

Belongs to the elongation factor P family.

It is found in the cytoplasm. The protein operates within protein biosynthesis; polypeptide chain elongation. Involved in peptide bond synthesis. Stimulates efficient translation and peptide-bond synthesis on native or reconstituted 70S ribosomes in vitro. Probably functions indirectly by altering the affinity of the ribosome for aminoacyl-tRNA, thus increasing their reactivity as acceptors for peptidyl transferase. This is Elongation factor P from Desulfitobacterium hafniense (strain Y51).